A 927-amino-acid polypeptide reads, in one-letter code: MTSKMEFTDRAKKALEDAMALAEQYAHSQLLPVHLAVALLDPLPDPSKDQQNAPAGATSSLFRQVIERAHGDPQLFDRALKKALVRLPSQDPPPDHVSMAPSFHTVLRKANELQKTQKDTYIAVDHLITALAEEPSIMNALKEANIPKPKLVTDAIQAIRGTKRVDSRNADTEEEHENLAKFTIDMTAMAREGKIDPVIGREEEIRRVIRILSRRTKNNPVLIGEPGVGKTTVVEGLAQRIVNADVPDNLANCKLLSLDVGALVAGSKYRGEFEERMKGVLKEISESKEMIILFIDEIHLLMGAGASGEGGMDAANLLKPMLARGQLHCIGATTLAEYRKYIEKDAAFERRFQQVIVKEPSVSETISILRGLKEKYEVHHGVTISDAAIVAAANLAARYLTSRRLPDSAIDLIDEAAAAVRVARESQPEIIDSLERKLRQLKIEIHALSREKDEASKARLEQAKKDAENVEEELRPLREKYEQEKQRAKALQEARMKLESLRQKAEEASRMGDHSRAADLQYYAIPEQEAVIKRLEKEKAAADAALNAAAAETGGAMITDVVGPDQINEIVARWTGIPVTRLKTSEKEKLLHMEKHLSKIVVGQKEAVQSVSNAIRLQRSGLSNPNQPPSFLFCGPSGTGKTLLTKALAEFLFDDPKAMIRFDMSEYQERHSLSRMIGAPPGYVGHDSGGQLTEALRRKPFSILLFDEVEKAAKEVLTVLLQLMDDGRITDGQGRVVDARNCIVVMTSNLGAEYLSRPNAKDGKIDPTTRELVMNALRNYFLPEFLNRISSIVIFNRLTRREIRKIVELRIAEIQKRLQDNDRNVKIEVSEEAKDKLGALGYSPAYGARPLQRVLEKEVLNRLAVLILRGSIRDGEVARVVVQDGKITVLPNHPEVNDEDDEMMLDEEDAVDEVAPESEMDEDLYDD.

The region spanning 2–162 is the Clp R domain; that stretch reads TSKMEFTDRA…TDAIQAIRGT (161 aa). Repeat regions lie at residues 7–87 and 99–162; these read FTDR…LVRL and MAPS…IRGT. Residues 179–428 are NBD1; the sequence is LAKFTIDMTA…AVRVARESQP (250 aa). 224–231 serves as a coordination point for ATP; it reads GEPGVGKT. The stretch at 429–553 forms a coiled coil; it reads EIIDSLERKL…AALNAAAAET (125 aa). Residues 454–473 are disordered; that stretch reads EASKARLEQAKKDAENVEEE. Positions 562 to 752 are NBD2; it reads VGPDQINEIV…IVVMTSNLGA (191 aa). Position 635-642 (635-642) interacts with ATP; sequence GPSGTGKT. The tract at residues 908-927 is disordered; that stretch reads EDAVDEVAPESEMDEDLYDD.

The protein belongs to the ClpA/ClpB family. As to quaternary structure, homohexamer, forming a ring with a central pore.

The protein localises to the cytoplasm. Its subcellular location is the nucleus. In terms of biological role, required, in concert with Hsp40 and Hsp70 and small Hsps, for the dissociation, resolubilization and refolding of aggregates of damaged proteins after heat or other environmental stresses. Extracts proteins from aggregates by unfolding and threading them in an ATP-dependent process through the axial channel of the protein hexamer, after which they can be refolded by components of the Hsp70/Hsp40 chaperone system. The polypeptide is Heat shock protein hsp98 (hsp98) (Neurospora crassa (strain ATCC 24698 / 74-OR23-1A / CBS 708.71 / DSM 1257 / FGSC 987)).